Reading from the N-terminus, the 236-residue chain is Osmoprotectant import permease protein OsmY (236 aa).

A run of 6 helical transmembrane segments spans residues 9-29 (VLGF…GIGL), 47-67 (LMLV…SGIL), 95-115 (VLAL…VALF), 126-146 (TYAG…GIGM), 180-200 (PLAF…GIYL), and 207-227 (ILGA…LAWF). The 182-residue stretch at 43-224 (GQRHLMLVFT…LFALILDTLL (182 aa)) folds into the ABC transmembrane type-1 domain.

This sequence belongs to the binding-protein-dependent transport system permease family. In terms of assembly, the complex is composed of two ATP-binding proteins (OsmV), two transmembrane proteins (OsmW and OsmY) and a solute-binding protein (OsmX).

The protein resides in the cell inner membrane. Functionally, part of the OsmU ABC transporter complex, which is involved in the uptake of osmoprotectants such as choline-O-sulfate and glycine betaine. Probably responsible for the translocation of the substrate across the membrane. The polypeptide is Osmoprotectant import permease protein OsmY (osmY) (Salmonella typhimurium (strain LT2 / SGSC1412 / ATCC 700720)).